The following is a 224-amino-acid chain: Probable GTP-binding protein EngB (224 aa).

Positions isoleucine 31 to proline 205 constitute an EngB-type G domain. Residues glycine 39–serine 46, glycine 66–leucine 70, aspartate 84–glycine 87, threonine 151–aspartate 154, and leucine 184–serine 186 contribute to the GTP site. The Mg(2+) site is built by serine 46 and threonine 68.

It belongs to the TRAFAC class TrmE-Era-EngA-EngB-Septin-like GTPase superfamily. EngB GTPase family. It depends on Mg(2+) as a cofactor.

In terms of biological role, necessary for normal cell division and for the maintenance of normal septation. This chain is Probable GTP-binding protein EngB, found in Shewanella frigidimarina (strain NCIMB 400).